A 290-amino-acid polypeptide reads, in one-letter code: Protein CREG2 (290 aa).

The signal sequence occupies residues 1–31 (MSVRRGRRPARPGTRLSWLLCCSALLSPAAG). Residues N165 and N166 are each glycosylated (N-linked (GlcNAc...) asparagine).

Belongs to the CREG family. It is not sure whether N-glycosylation is on Asn-165 and/or Asn-166. In terms of tissue distribution, brain specific mainly in the limbic system and faintly in the spinal cord but not in cerebellum.

It is found in the secreted. This is Protein CREG2 (CREG2) from Homo sapiens (Human).